The following is a 475-amino-acid chain: tRNA-2-methylthio-N(6)-dimethylallyladenosine synthase (475 aa).

The MTTase N-terminal domain maps to 3–120 (KKLHIKTWGC…LPEMIDQIRA (118 aa)). 6 residues coordinate [4Fe-4S] cluster: C12, C49, C83, C157, C161, and C164. A Radical SAM core domain is found at 143–375 (RADGPSAFVS…QDRITQQAMR (233 aa)). A TRAM domain is found at 378-441 (RQMVGTVQRI…TNSLRGVFIR (64 aa)).

It belongs to the methylthiotransferase family. MiaB subfamily. In terms of assembly, monomer. [4Fe-4S] cluster is required as a cofactor.

It localises to the cytoplasm. It catalyses the reaction N(6)-dimethylallyladenosine(37) in tRNA + (sulfur carrier)-SH + AH2 + 2 S-adenosyl-L-methionine = 2-methylsulfanyl-N(6)-dimethylallyladenosine(37) in tRNA + (sulfur carrier)-H + 5'-deoxyadenosine + L-methionine + A + S-adenosyl-L-homocysteine + 2 H(+). Catalyzes the methylthiolation of N6-(dimethylallyl)adenosine (i(6)A), leading to the formation of 2-methylthio-N6-(dimethylallyl)adenosine (ms(2)i(6)A) at position 37 in tRNAs that read codons beginning with uridine. The protein is tRNA-2-methylthio-N(6)-dimethylallyladenosine synthase of Shewanella halifaxensis (strain HAW-EB4).